We begin with the raw amino-acid sequence, 288 residues long: Intermediate transcription factor 3 small subunit (288 aa).

This sequence belongs to the orthopoxvirus OPG134 family. In terms of assembly, heterodimer of a 45 kDa (A23R) and a 32 kDa (A8R) subunit to form the virus intermediate transcription factor (VITF)-3.

Its function is as follows. Acts with RNA polymerase to initiate transcription from intermediate gene promoters. This chain is Intermediate transcription factor 3 small subunit (OPG134), found in Vaccinia virus (strain Copenhagen) (VACV).